Consider the following 220-residue polypeptide: Late transcription elongation factor OPG087 (220 aa).

The protein belongs to the orthopoxvirus OPG087 family. In terms of assembly, interacts with H5 and A18. Might be part of a transcription complex composed at least of OPG087, OPG145, and OPG110.

Functionally, involved in postreplicative transcription elongation on intermediate and late genes. The chain is Late transcription elongation factor OPG087 (OPG087) from Homo sapiens (Human).